Reading from the N-terminus, the 583-residue chain is Sensor protein SrrB (583 aa).

Residues 1–11 (MMSRLNSVVIK) are Cytoplasmic-facing. Residues 12-32 (LWLTIILIVTTVLILLSIALI) traverse the membrane as a helical segment. Residues 33 to 174 (TFMQYYFTQE…SIEDTNNAIT (142 aa)) are Extracellular-facing. A helical transmembrane segment spans residues 175 to 195 (IITIITAVIFLTITTVFAFFL). The Cytoplasmic portion of the chain corresponds to 196–583 (SSRITKPLRR…TFIIKLPKPE (388 aa)). The HAMP domain occupies 197–249 (SRITKPLRRLRDQATRVSEGDYSYKPSVTTKDEIGQLSQAFNQMSTEIEEHVD). The region spanning 366 to 583 (NVSHELRTPI…TFIIKLPKPE (218 aa)) is the Histidine kinase domain. Phosphohistidine; by autocatalysis is present on His-369.

It is found in the cell membrane. It carries out the reaction ATP + protein L-histidine = ADP + protein N-phospho-L-histidine.. Member of the two-component regulatory system SrrA/SrrB, which is involved in the global regulation of staphylococcal virulence factors in response to environmental oxygen levels as well as biofilm formation. Also plays an essential role in host-derived nitric oxide resistance by regulating hmp/flavohemoglobin, an enzyme that detoxifies nitric oxide by converting it to nitrate. Functions as a sensor protein kinase which is autophosphorylated at a histidine residue and transfers its phosphate group to SrrA. In turn, SrrA binds to the upstream promoter regions of the target genes to positively and negatively regulate their expression. This is Sensor protein SrrB (srrB) from Staphylococcus aureus.